The following is a 177-amino-acid chain: Large ribosomal subunit protein uL6 (177 aa).

It belongs to the universal ribosomal protein uL6 family. In terms of assembly, part of the 50S ribosomal subunit.

Its function is as follows. This protein binds to the 23S rRNA, and is important in its secondary structure. It is located near the subunit interface in the base of the L7/L12 stalk, and near the tRNA binding site of the peptidyltransferase center. The chain is Large ribosomal subunit protein uL6 from Alkalilimnicola ehrlichii (strain ATCC BAA-1101 / DSM 17681 / MLHE-1).